We begin with the raw amino-acid sequence, 25 residues long: Small ribosomal subunit protein eS32 (25 aa).

Residues 1-25 (MRAKWRKKRMRRLKRKRRKMRQRSK) form a disordered region.

The protein belongs to the eukaryotic ribosomal protein eS32 family. Component of the large ribosomal subunit.

The protein localises to the cytoplasm. Functionally, component of the small ribosomal subunit. The ribosome is a large ribonucleoprotein complex responsible for the synthesis of proteins in the cell. The protein is Small ribosomal subunit protein eS32 (rpl41) of Cyprinus carpio (Common carp).